A 286-amino-acid chain; its full sequence is uncharacterized protein (286 aa).

This is an uncharacterized protein from Acidianus sp. F28 (AFV-2).